The primary structure comprises 218 residues: MLSYIKRKLSESDSGVSSVATVTSSCGGDSGRAGGTGSSESGTGSSSASISGRSQNADELVRKTSQMSMDDEAIAFGEDALLHELGYKNQTELQETIYDLLRGIRDPEKPCTLEDLNVVYEDGIFVMPPTRSNVSVVRIEFNPTVPHCSLATLIGLCIRVKVERGLPHNIKLDIYIKKGAHQTEEEINKQINDKERIAAAMENPNLRDLVENCIKDEE.

The tract at residues 1–59 is disordered; it reads MLSYIKRKLSESDSGVSSVATVTSSCGGDSGRAGGTGSSESGTGSSSASISGRSQNADE. Residues 12–27 are compositionally biased toward low complexity; it reads SDSGVSSVATVTSSCG. Ser14 is modified (phosphoserine). Residues 28-37 are compositionally biased toward gly residues; the sequence is GDSGRAGGTG. Residues 38–54 show a composition bias toward low complexity; it reads SSESGTGSSSASISGRS. Residue Ser65 is modified to Phosphoserine.

Belongs to the MIP18 family. Component of the CGX complex composed of crb, galla (galla-1 or galla-2) and Xpd. Interacts with crb (via intracellular domain). Is not able to interact with Xpd in the absence of crb.

The protein resides in the apical cell membrane. Its subcellular location is the cytoplasm. It is found in the cytoskeleton. The protein localises to the spindle. Functionally, component of the crb-galla-Xpd (CGX) complex which is essential for proper mitotic chromosome segregation in early embryos. The CGX complex is also required for cell proliferation in developing wing disks. In the CGX complex, acts with crb to recruit Xpd thus forming the functional complex. This Drosophila melanogaster (Fruit fly) protein is MIP18 family protein galla-1.